Reading from the N-terminus, the 35-residue chain is Photosystem II reaction center protein T (35 aa).

A helical transmembrane segment spans residues 3–23 (ALVYTFLLVSTLGIIFFAIFF).

Belongs to the PsbT family. PSII is composed of 1 copy each of membrane proteins PsbA, PsbB, PsbC, PsbD, PsbE, PsbF, PsbH, PsbI, PsbJ, PsbK, PsbL, PsbM, PsbT, PsbY, PsbZ, Psb30/Ycf12, at least 3 peripheral proteins of the oxygen-evolving complex and a large number of cofactors. It forms dimeric complexes.

It is found in the plastid. Its subcellular location is the chloroplast thylakoid membrane. In terms of biological role, found at the monomer-monomer interface of the photosystem II (PS II) dimer, plays a role in assembly and dimerization of PSII. PSII is a light-driven water plastoquinone oxidoreductase, using light energy to abstract electrons from H(2)O, generating a proton gradient subsequently used for ATP formation. The polypeptide is Photosystem II reaction center protein T (Gunnera chilensis (Chilean rhubarb)).